Here is a 283-residue protein sequence, read N- to C-terminus: GDP-polyphosphate phosphotransferase (283 aa).

Belongs to the polyphosphate kinase 2 (PPK2) family. Class I subfamily.

It catalyses the reaction [phosphate](n) + GTP = [phosphate](n+1) + GDP. Uses inorganic polyphosphate (polyP) as a donor to convert GDP to GTP. The protein is GDP-polyphosphate phosphotransferase of Mycolicibacterium smegmatis (strain ATCC 700084 / mc(2)155) (Mycobacterium smegmatis).